The primary structure comprises 230 residues: Protein UPS2, mitochondrial (230 aa).

Residues 1–175 enclose the PRELI/MSF1 domain; it reads MKLFQNSYDF…VLQVFSENWE (175 aa).

It belongs to the slowmo family. As to quaternary structure, interacts with MDM35.

The protein localises to the mitochondrion inner membrane. It is found in the mitochondrion intermembrane space. Required for mitochondrial cristae morphogenesis and MGM1-processing. Controls the stability of mitochondrial phosphatidylethanolamine (PE). With UPS1, controls the level of cardiolipin in mitochondria. Cardiolipin is a unique phospholipid with four fatty acid chains and is present mainly in the mitochondrial inner membrane where it stabilizes the electron transport chain supercomplex between complexes III and IV through direct interaction of their subunits. The sequence is that of Protein UPS2, mitochondrial (UPS2) from Saccharomyces cerevisiae (strain ATCC 204508 / S288c) (Baker's yeast).